The following is a 269-amino-acid chain: uncharacterized protein (269 aa).

The protein to T.pallidum TP0678.

This is an uncharacterized protein from Borreliella burgdorferi (strain ATCC 35210 / DSM 4680 / CIP 102532 / B31) (Borrelia burgdorferi).